Consider the following 442-residue polypeptide: 3-ketoacyl-CoA thiolase (442 aa).

Cysteine 105 functions as the Acyl-thioester intermediate in the catalytic mechanism. Active-site proton acceptor residues include histidine 398 and cysteine 428.

It belongs to the thiolase-like superfamily. Thiolase family. Heterotetramer of two alpha chains (FadJ) and two beta chains (FadI).

Its subcellular location is the cytoplasm. It carries out the reaction an acyl-CoA + acetyl-CoA = a 3-oxoacyl-CoA + CoA. It functions in the pathway lipid metabolism; fatty acid beta-oxidation. Functionally, catalyzes the final step of fatty acid oxidation in which acetyl-CoA is released and the CoA ester of a fatty acid two carbons shorter is formed. This chain is 3-ketoacyl-CoA thiolase, found in Aliivibrio fischeri (strain MJ11) (Vibrio fischeri).